The following is a 205-amino-acid chain: Protein phosphatase inhibitor 2 (205 aa).

The disordered stretch occupies residues 1 to 44 (MAASTASHRPIKGILKNKTSTTSSMVASAEQPRGNVDEELSKKS). Ala-2 is modified (N-acetylalanine). 2 required for binding PPP1CC regions span residues 12–17 (KGILKN) and 43–55 (KSQK…ILAT). A compositionally biased stretch (polar residues) spans 17–26 (NKTSTTSSMV). Residues 35–44 (NVDEELSKKS) show a composition bias toward basic and acidic residues. At Ser-44 the chain carries Phosphoserine; by ATM. Thr-73 carries the phosphothreonine; by GSK3 modification. Phosphoserine is present on Ser-87. Residues Thr-89 and Thr-92 each carry the phosphothreonine modification. Positions 111–142 (EPKYRIQEQESSGEEDSDLSPEEREKKRQFEM) are disordered. Residues Ser-121, Ser-122, Ser-127, and Ser-130 each carry the phosphoserine modification. The segment covering 121–130 (SSGEEDSDLS) has biased composition (acidic residues). A compositionally biased stretch (basic and acidic residues) spans 131–142 (PEEREKKRQFEM). The tract at residues 147–150 (HYNE) is required for binding PPP1CC catalytic center, displacing metal ions and inhibition of PPP1CC catalytic activity. Residues 163–205 (KDLHDDDEDEEMLETADGESMNTEESNQGSTPSDQQQNKLRSS) are disordered. The segment covering 167-179 (DDDEDEEMLETAD) has biased composition (acidic residues). Residues 182-205 (SMNTEESNQGSTPSDQQQNKLRSS) show a composition bias toward polar residues.

It belongs to the protein phosphatase inhibitor 2 family. In terms of assembly, heterodimer with PP1. Phosphorylation on Thr-73 by GSK3 activates PP1 by dissociating the PP1-PPP1R2 complex. Phosphorylation on Ser-44 by ATM activates PP1 by dissociating the PP1-PPP1R2 complex.

Its function is as follows. Inhibitor of protein-phosphatase 1. This Homo sapiens (Human) protein is Protein phosphatase inhibitor 2 (PPP1R2).